Reading from the N-terminus, the 526-residue chain is Keratin, type I cytoskeletal 10 (526 aa).

Residues 1–16 are compositionally biased toward low complexity; it reads MSVRFSSNSRQYSSAR. A disordered region spans residues 1–40; it reads MSVRFSSNSRQYSSARSGGGGGGGGGGSSIRVSSTKSSLG. The interval 1 to 144 is head; it reads MSVRFSSNSR…GDGGGLLSGN (144 aa). Phosphoserine is present on residues Ser-17, Ser-38, Ser-49, Ser-52, and Ser-169. Gly residues predominate over residues 17-28; it reads SGGGGGGGGGGS. The tract at residues 145–180 is coil 1A; it reads EKVTMQNLNDRLASYMNKVRDLEESNYELEGKIKEW. The IF rod domain occupies 145–459; it reads EKVTMQNLND…SLLEGEGGYV (315 aa). Positions 181-201 are linker 1; it reads YEKHGNSSQREPRDYSKYYKT. Residues 202–293 are coil 1B; that stretch reads IEDLKGQIVN…KNHEEEMKDL (92 aa). Positions 294 to 316 are linker 12; sequence QNVSTGDVNVEMNAAPGVDLTQL. The tract at residues 317 to 455 is coil 2; the sequence is LNNMRNQYEQ…QTYRSLLEGE (139 aa). The tail stretch occupies residues 456 to 526; that stretch reads GGYVGNLQIT…IESETKKHFY (71 aa).

The protein belongs to the intermediate filament family. As to quaternary structure, heterotetramer of two type I and two type II keratins. Heterodimer with KRT1. Two heterodimers of KRT1 and KRT10 form a heterotetramer. The KRT10 subunit in the heterotetramer is probably disulfide-linked.

The protein resides in the secreted. It is found in the extracellular space. The protein localises to the cell surface. Its subcellular location is the cytoplasm. In terms of biological role, plays a role in the establishment of the epidermal barrier on plantar skin. Involved in the maintenance of cell layer development and keratin filament bundles in suprabasal cells of the epithelium. The polypeptide is Keratin, type I cytoskeletal 10 (Rattus norvegicus (Rat)).